The sequence spans 358 residues: MIPSKRILTDKDVKIWEESETREDILSFIESLAKAVEGFENDQVSEPVSDSVQSTIAVLTEIDKLIKLHPVIQDKNTSRFGKVEFRDFYDDVCEKADDLLSSHFPALTSEQIEQLSIYLQESWGNKRRIDYGSGHELNFICFLYGLTHYKIFDLQRDARNLVLVLFIEYLKIMREIETLYWLEPAGSHGVWGLDDYHFLPFLFGAFQLAPHKHLKPKSIHNEELVEMFADKYLYFGCIAFINSVKTSTSLRWHSPMLDDISGVKKWSKVAEGMIKMYKAEVLGKLPIMQHFYFSEFLVCPEGISEPRTHIHNGDEDDDQCCQDGAAHNTWGDCCGIKIPSLYAANAMEKQSHKPIPFD.

It belongs to the PTPA-type PPIase family.

The protein localises to the cytoplasm. It carries out the reaction [protein]-peptidylproline (omega=180) = [protein]-peptidylproline (omega=0). In terms of biological role, PPIases accelerate the folding of proteins. It catalyzes the cis-trans isomerization of proline imidic peptide bonds in oligopeptides. Acts as a regulatory subunit for PP2A-like phosphatases modulating their activity or substrate specificity, probably by inducing a conformational change in the catalytic subunit, a direct target of the PPIase. Can reactivate inactive phosphatase PP2A-phosphatase methylesterase complexes (PP2Ai) in presence of ATP and Mg(2+) by dissociating the inactive form from the complex. The polypeptide is Serine/threonine-protein phosphatase 2A activator 2 (RRD2) (Candida glabrata (strain ATCC 2001 / BCRC 20586 / JCM 3761 / NBRC 0622 / NRRL Y-65 / CBS 138) (Yeast)).